An 82-amino-acid polypeptide reads, in one-letter code: Metallothionein-like protein 2A (82 aa).

The protein belongs to the metallothionein superfamily. Type 15 family. In terms of tissue distribution, expressed in stems, leaves, rachis, inflorescences and seeds.

Metallothioneins have a high content of cysteine residues that bind various heavy metals. The protein is Metallothionein-like protein 2A (MT2A) of Oryza sativa subsp. japonica (Rice).